The chain runs to 165 residues: Lipoprotein signal peptidase (165 aa).

Helical transmembrane passes span 9–29 (LLTI…VLLY), 69–89 (KYFL…FLFL), and 100–120 (FSLI…FFYN). Active-site residues include Asp124 and Asp142. A helical transmembrane segment spans residues 133 to 153 (WSFPTFNFADIFISLGTLIFV).

It belongs to the peptidase A8 family.

It localises to the cell inner membrane. The enzyme catalyses Release of signal peptides from bacterial membrane prolipoproteins. Hydrolyzes -Xaa-Yaa-Zaa-|-(S,diacylglyceryl)Cys-, in which Xaa is hydrophobic (preferably Leu), and Yaa (Ala or Ser) and Zaa (Gly or Ala) have small, neutral side chains.. Its pathway is protein modification; lipoprotein biosynthesis (signal peptide cleavage). In terms of biological role, this protein specifically catalyzes the removal of signal peptides from prolipoproteins. The polypeptide is Lipoprotein signal peptidase (Chlamydia felis (strain Fe/C-56) (Chlamydophila felis)).